Consider the following 330-residue polypeptide: 2-methoxy-6-polyprenyl-1,4-benzoquinol methylase, mitochondrial (330 aa).

A mitochondrion-targeting transit peptide spans 1-42; it reads MAAPRSWALWSFCGCGWSRAVSGCRLPGLRSSSPRGPLGARL. S-adenosyl-L-methionine contacts are provided by residues Thr-117, Asp-171, and 199 to 200; that span reads DA.

The protein belongs to the class I-like SAM-binding methyltransferase superfamily. MenG/UbiE family. Component of a multi-subunit COQ enzyme complex, composed of at least COQ3, COQ4, COQ5, COQ6, COQ7 and COQ9. Interacts with PYURF; the interaction is direct, stabilizes COQ5 protein and associates PYURF with COQ enzyme complex.

It is found in the mitochondrion inner membrane. It carries out the reaction 2-methoxy-6-(all-trans-decaprenyl)benzene-1,4-diol + S-adenosyl-L-methionine = 5-methoxy-2-methyl-3-(all-trans-decaprenyl)benzene-1,4-diol + S-adenosyl-L-homocysteine + H(+). Its pathway is cofactor biosynthesis; ubiquinone biosynthesis. In terms of biological role, methyltransferase required for the conversion of 2-decaprenyl-6-methoxy-1,4-benzoquinol (DDMQH2) to 2-decaprenyl-3-methyl-6-methoxy-1,4-benzoquinol (DMQH2). The protein is 2-methoxy-6-polyprenyl-1,4-benzoquinol methylase, mitochondrial of Bos taurus (Bovine).